A 646-amino-acid chain; its full sequence is Zinc finger protein 503 (646 aa).

Over residues 1–11 (MSTAPSLSALR) the composition is skewed to polar residues. A disordered region spans residues 1–70 (MSTAPSLSAL…PPSDPLRQAN (70 aa)). Positions 16 to 28 (SGGGGGGGGGGGA) are enriched in gly residues. Positions 34–52 (SALSGNSSGPGPGSSPAGS) are enriched in low complexity. Ser102 is subject to Phosphoserine. The tract at residues 121 to 332 (SQIGKPDPSP…PSAPTSSSVL (212 aa)) is disordered. Positions 130 to 139 (PSSKLSSVAS) are enriched in low complexity. 2 stretches are compositionally biased toward gly residues: residues 140-152 (NGGG…GGAA) and 189-205 (GGGG…GGGV). Lys209 bears the N6-acetyllysine mark. A compositionally biased stretch (polar residues) spans 217–226 (ATCQPFTPRT). Residues 227–240 (GSPSSSASACSPGG) are compositionally biased toward low complexity. 2 positions are modified to phosphoserine: Ser231 and Ser237. Over residues 250 to 259 (EGKDDKKDTD) the composition is skewed to basic and acidic residues. 2 stretches are compositionally biased toward gly residues: residues 260–277 (VGGG…GGPT) and 300–315 (GGPG…GGSS). A compositionally biased stretch (low complexity) spans 316 to 330 (GSSSGSGPSAPTSSS). The segment at 514 to 542 (HICNWVSANGPCDKRFATSEELLSHLRTH) adopts a C2H2-type zinc-finger fold. Arg636 is modified (omega-N-methylarginine).

Belongs to the Elbow/Noc family.

The protein resides in the nucleus. Its function is as follows. May function as a transcriptional repressor. The polypeptide is Zinc finger protein 503 (ZNF503) (Homo sapiens (Human)).